The sequence spans 93 residues: RNA-binding protein Hfq (93 aa).

In terms of domain architecture, Sm spans 9 to 68 (DPYLNALRRERIPVSIYLVNGIKLQGQIESFDQFVILLKNTVSQMVYKHAISTVVPARAI). Residues 70 to 81 (HNNNSNHAHQAA) show a composition bias toward low complexity. Residues 70–93 (HNNNSNHAHQAAPVQSAEVVEKVE) are disordered.

It belongs to the Hfq family. Homohexamer.

Its function is as follows. RNA chaperone that binds small regulatory RNA (sRNAs) and mRNAs to facilitate mRNA translational regulation in response to envelope stress, environmental stress and changes in metabolite concentrations. Also binds with high specificity to tRNAs. The sequence is that of RNA-binding protein Hfq from Glaesserella parasuis serovar 5 (strain SH0165) (Haemophilus parasuis).